A 189-amino-acid chain; its full sequence is Elongation factor P (189 aa).

Belongs to the elongation factor P family.

It localises to the cytoplasm. It functions in the pathway protein biosynthesis; polypeptide chain elongation. Its function is as follows. Involved in peptide bond synthesis. Stimulates efficient translation and peptide-bond synthesis on native or reconstituted 70S ribosomes in vitro. Probably functions indirectly by altering the affinity of the ribosome for aminoacyl-tRNA, thus increasing their reactivity as acceptors for peptidyl transferase. This Aster yellows witches'-broom phytoplasma (strain AYWB) protein is Elongation factor P.